The primary structure comprises 751 residues: Dachshund homolog 1 (751 aa).

A disordered region spans residues 1–178 (MAVPAALIPP…PSPVENTPQN (178 aa)). 2 stretches are compositionally biased toward low complexity: residues 20–53 (ISTS…SGPT) and 61–74 (ASSA…TVTS). 2 stretches are compositionally biased toward gly residues: residues 75 to 97 (PGGG…GGGS) and 107 to 119 (SSGG…GGGA). A compositionally biased stretch (low complexity) spans 120–156 (SSTPITASTGSSSSSSSSSSSSSSSSSSSSSSSSSSS). Residues 167–178 (STPSPVENTPQN) are compositionally biased toward polar residues. The DACHbox-N stretch occupies residues 182–268 (KMVDLRGAKV…LISRKDFETL (87 aa)). The interval 182-377 (KMVDLRGAKV…VGSSGGSWDK (196 aa)) is interaction with SIX6 and HDAC3. Disordered regions lie at residues 273–295 (TNAS…PENS), 351–393 (SNNQ…APVA), 467–525 (SPPS…RIPV), and 537–556 (MGLS…AGHD). 2 stretches are compositionally biased toward polar residues: residues 285 to 294 (RTQSVTSPEN) and 351 to 369 (SNNQ…SSVG). Phosphoserine is present on serine 484. Residues 499 to 517 (SHPSSHRSSSVSSSPARTE) show a composition bias toward low complexity. Positions 609 to 689 (SSIETLLTNI…KAKRKLQEAL (81 aa)) are DACHbox-C. The segment at 620–699 (GLLKVAIDNA…EFETKRREQA (80 aa)) is interaction with SIN3A. Residues 623–711 (KVAIDNARAQ…TLKQAASADS (89 aa)) are a coiled coil.

It belongs to the DACH/dachshund family. As to quaternary structure, interacts with SIX1, SIX6 and EYA3. Interacts with NCOR1 and HDAC3 through its N-terminus. Interacts with SIN3A through its C-terminus. Interacts with SMAD3 and SMAD4. In terms of tissue distribution, expressed at higher levels in adult kidney and lung, and at lower levels in brain and testis. Expressed in embryonal kidneys, eyes, cochleae and limb buds.

Its subcellular location is the nucleus. In terms of biological role, transcription factor that is involved in regulation of organogenesis. Seems to be a regulator of SIX1, SIX6 and probably SIX5. Corepression of precursor cell proliferation in myoblasts by SIX1 is switched to coactivation through recruitment of EYA3 to the SIX1-DACH1 complex. Transcriptional activation also seems to involve association of CREBBP. Seems to act as a corepressor of SIX6 in regulating proliferation by directly repressing cyclin-dependent kinase inhibitors, including the p27Kip1 promoter. Inhibits TGF-beta signaling through interaction with SMAD4 and NCOR1. Binds to chromatin DNA via its DACHbox-N domain. This chain is Dachshund homolog 1 (Dach1), found in Mus musculus (Mouse).